A 1553-amino-acid polypeptide reads, in one-letter code: Sodium channel protein PaFPC1 (1553 aa).

The disordered stretch occupies residues Met-1 to Gln-68. Over Met-1–Pro-140 the chain is Cytoplasmic. Residues Glu-34–Ala-60 are compositionally biased toward basic and acidic residues. Residues Ile-141 to Met-159 form a helical membrane-spanning segment. Topologically, residues Pro-160–Thr-165 are extracellular. A helical membrane pass occupies residues Tyr-166–Ala-186. At Arg-187 to Pro-200 the chain is on the cytoplasmic side. Residues Trp-201 to Val-218 form a helical membrane-spanning segment. Residues Asp-219 to Tyr-224 lie on the Extracellular side of the membrane. The chain crosses the membrane as a helical span at residues Ala-225–Val-241. Residues Pro-242–Asp-260 lie on the Cytoplasmic side of the membrane. The chain crosses the membrane as a helical span at residues Leu-261–Tyr-280. At Met-281–Thr-360 the chain is on the extracellular side. Cystine bridges form between Cys-288-Cys-337 and Cys-328-Cys-343. 4 N-linked (GlcNAc...) asparagine glycosylation sites follow: Asn-300, Asn-308, Asn-312, and Asn-330. Residues Phe-361–Leu-385 constitute an intramembrane region (pore-forming). A saxitoxin-binding site is contributed by Glu-378. Topologically, residues Arg-386 to His-392 are extracellular. A helical membrane pass occupies residues Ile-393–Ala-413. Residues Val-414–Pro-519 lie on the Cytoplasmic side of the membrane. The helical transmembrane segment at Phe-520–Leu-538 threads the bilayer. The Extracellular segment spans residues Asp-539–Arg-549. The chain crosses the membrane as a helical span at residues Ile-550–Lys-569. Over Ile-570 to Trp-583 the chain is Cytoplasmic. A helical membrane pass occupies residues Asn-584–Val-603. The Extracellular portion of the chain corresponds to Gln-604–Gly-605. The helical transmembrane segment at Leu-606–Phe-623 threads the bilayer. The Cytoplasmic segment spans residues Trp-624 to Gly-639. Residues Ala-640–Ile-658 traverse the membrane as a helical segment. The Extracellular portion of the chain corresponds to Gly-659–Asp-686. Asn-683 is a glycosylation site (N-linked (GlcNAc...) asparagine). An intramembrane region (pore-forming) is located at residues Phe-687–Trp-707. Glu-701 and Glu-704 together coordinate tetrodotoxin. A saxitoxin-binding site is contributed by Glu-704. The Extracellular portion of the chain corresponds to Asp-708–Pro-719. Cys-709 and Cys-717 are disulfide-bonded. Residues Phe-720 to Leu-740 form a helical membrane-spanning segment. Over Leu-741–Tyr-857 the chain is Cytoplasmic. The chain crosses the membrane as a helical span at residues Phe-858–Leu-875. Residues Glu-876 to Asn-888 are Extracellular-facing. A helical transmembrane segment spans residues Ile-889–Ile-907. Over Met-908–Lys-921 the chain is Cytoplasmic. A helical transmembrane segment spans residues Trp-922 to Met-940. The Extracellular segment spans residues Cys-941–Glu-945. Residues Ala-946–Lys-964 form a helical membrane-spanning segment. At Val-965 to His-981 the chain is on the cytoplasmic side. The helical transmembrane segment at Ile-982–Val-1001 threads the bilayer. The Extracellular portion of the chain corresponds to Gln-1002 to Val-1047. A disulfide bridge connects residues Cys-1011 and Cys-1030. The N-linked (GlcNAc...) asparagine glycan is linked to Asn-1015. N-linked (GlcNAc...) asparagine; atypical glycosylation occurs at Asn-1028. An N-linked (GlcNAc...) asparagine glycan is attached at Asn-1034. The segment at residues Gly-1048–Asp-1069 is an intramembrane region (pore-forming). A tetrodotoxin-binding site is contributed by Gly-1062. Residue Trp-1063 coordinates saxitoxin. At Ala-1070–Ile-1086 the chain is on the extracellular side. Residues Tyr-1087–Val-1108 form a helical membrane-spanning segment. Topologically, residues Cys-1109–Lys-1171 are cytoplasmic. Positions Gln-1133–Ala-1146 are linker region that may regulate channel inactivation. Residues Phe-1172 to Ile-1189 form a helical membrane-spanning segment. Topologically, residues Asp-1190–Glu-1200 are extracellular. Residues Val-1201–Ile-1219 form a helical membrane-spanning segment. At Lys-1220–Asp-1231 the chain is on the cytoplasmic side. The helical transmembrane segment at Pro-1232–Met-1249 threads the bilayer. Topologically, residues Leu-1250 to Thr-1262 are extracellular. A helical transmembrane segment spans residues Leu-1263–Phe-1279. The Cytoplasmic portion of the chain corresponds to Gln-1280–Thr-1298. A helical transmembrane segment spans residues Leu-1299–Phe-1316. Residues Gly-1317–Thr-1338 lie on the Extracellular side of the membrane. Residues Phe-1339–Ala-1361 constitute an intramembrane region (pore-forming). Tetrodotoxin is bound by residues Gly-1354 and Asp-1356. Asp-1356 serves as a coordination point for saxitoxin. At Ile-1362–Gly-1387 the chain is on the extracellular side. A disulfide bond links Cys-1368 and Cys-1381. Residues Ile-1388 to Ile-1410 traverse the membrane as a helical segment. Over Leu-1411 to Asn-1553 the chain is Cytoplasmic.

The protein belongs to the sodium channel (TC 1.A.1.10) family. As to expression, detected in adult nerve cord, muscle, gut and mushroom-shaped accessory glands.

Its subcellular location is the cell membrane. With respect to regulation, inhibited by the pore blockers saxitoxin and tetrodotoxin. In terms of biological role, mediates the voltage-dependent sodium ion permeability of excitable membranes. In Periplaneta americana (American cockroach), this protein is Sodium channel protein PaFPC1.